The following is a 154-amino-acid chain: Interleukin-2 (154 aa).

An N-terminal signal peptide occupies residues methionine 1 to serine 20. The O-linked (GalNAc...) threonine glycan is linked to threonine 23. A disulfide bridge connects residues cysteine 78 and cysteine 126.

This sequence belongs to the IL-2 family.

Its subcellular location is the secreted. Functionally, cytokine produced by activated CD4-positive helper T-cells and to a lesser extend activated CD8-positive T-cells and natural killer (NK) cells that plays pivotal roles in the immune response and tolerance. Binds to a receptor complex composed of either the high-affinity trimeric IL-2R (IL2RA/CD25, IL2RB/CD122 and IL2RG/CD132) or the low-affinity dimeric IL-2R (IL2RB and IL2RG). Interaction with the receptor leads to oligomerization and conformation changes in the IL-2R subunits resulting in downstream signaling starting with phosphorylation of JAK1 and JAK3. In turn, JAK1 and JAK3 phosphorylate the receptor to form a docking site leading to the phosphorylation of several substrates including STAT5. This process leads to activation of several pathways including STAT, phosphoinositide-3-kinase/PI3K and mitogen-activated protein kinase/MAPK pathways. Functions as a T-cell growth factor and can increase NK-cell cytolytic activity as well. Promotes strong proliferation of activated B-cells and subsequently immunoglobulin production. Plays a pivotal role in regulating the adaptive immune system by controlling the survival and proliferation of regulatory T-cells, which are required for the maintenance of immune tolerance. Moreover, participates in the differentiation and homeostasis of effector T-cell subsets, including Th1, Th2, Th17 as well as memory CD8-positive T-cells. The sequence is that of Interleukin-2 (IL2) from Lama glama (Llama).